The following is a 220-amino-acid chain: DNA replication complex GINS protein SLD5 (220 aa).

Belongs to the GINS4/SLD5 family. As to quaternary structure, component of the GINS complex. Interacts with EOL1 in the nucleus.

Its subcellular location is the nucleus. In terms of biological role, the GINS complex plays an essential role in the initiation of DNA replication. Required during embryogenesis. The chain is DNA replication complex GINS protein SLD5 from Arabidopsis thaliana (Mouse-ear cress).